We begin with the raw amino-acid sequence, 363 residues long: NAD(P)H-quinone oxidoreductase subunit 1, chloroplastic (363 aa).

Transmembrane regions (helical) follow at residues 30 to 50, 98 to 118, 129 to 149, 248 to 268, 300 to 320, and 343 to 363; these read LVPI…IVWL, FSIG…VIPF, IGIF…LMSG, YSGI…LLSS, IIGT…FLFI, and FLLP…LLSL.

The protein belongs to the complex I subunit 1 family. As to quaternary structure, NDH is composed of at least 16 different subunits, 5 of which are encoded in the nucleus.

Its subcellular location is the plastid. It localises to the chloroplast thylakoid membrane. It catalyses the reaction a plastoquinone + NADH + (n+1) H(+)(in) = a plastoquinol + NAD(+) + n H(+)(out). It carries out the reaction a plastoquinone + NADPH + (n+1) H(+)(in) = a plastoquinol + NADP(+) + n H(+)(out). NDH shuttles electrons from NAD(P)H:plastoquinone, via FMN and iron-sulfur (Fe-S) centers, to quinones in the photosynthetic chain and possibly in a chloroplast respiratory chain. The immediate electron acceptor for the enzyme in this species is believed to be plastoquinone. Couples the redox reaction to proton translocation, and thus conserves the redox energy in a proton gradient. This is NAD(P)H-quinone oxidoreductase subunit 1, chloroplastic from Gossypium hirsutum (Upland cotton).